A 244-amino-acid chain; its full sequence is MSSSRSGEHRRNYAQGRNYESSRSRGDQRDRDYREYRRNYRDERSSRRYEDSQRRDYSPARRRDRYERHRESVREESPRRPVEHERNWQPELKHGRERFRERDYEGRRDRKERRDGVSPFSPEGEGLERKREHEKLQAPSPKEEEERPVDQGDKMDGVKEDKDGSLEVGKSHDAMTRTKSAEEEIVEQEDEATAEMKRIMGFSGFDTTTGKKHGDVGQVYKQKKTKYRQYMNRPGGFNRPLDNE.

Composition is skewed to basic and acidic residues over residues 1 to 11 (MSSSRSGEHRR) and 20 to 116 (ESSR…RRDG). Disordered regions lie at residues 1-192 (MSSS…EDEA) and 223-244 (KKTKYRQYMNRPGGFNRPLDNE). Ser121 and Ser140 each carry phosphoserine. Positions 126 to 182 (GLERKREHEKLQAPSPKEEEERPVDQGDKMDGVKEDKDGSLEVGKSHDAMTRTKSAE) are enriched in basic and acidic residues. Acidic residues predominate over residues 183 to 192 (EEIVEQEDEA).

Belongs to the SNUT3 family. Part of a tri-snRNP complex.

Its subcellular location is the nucleus. May play a role in mRNA splicing. The sequence is that of U4/U6.U5 tri-snRNP-associated protein 3-like protein C162.01c from Schizosaccharomyces pombe (strain 972 / ATCC 24843) (Fission yeast).